The following is a 365-amino-acid chain: MTRRCSHCNHNGHNSRTCPNRGVKLFGVRLTEGSIRKSASMGNLSHYTGSGSGGHGTGSNTPGSPGDVPDHVAGDGYASEDFVAGSSSSRERKKGTPWTEEEHRMFLLGLQKLGKGDWRGISRNYVTTRTPTQVASHAQKYFIRQSNVSRRKRRSSLFDMVPDEVGDIPMDLQEPEEDNIPVETEMQGADSIHQTLAPSSLHAPSILEIEECESMDSTNSTTGEPTATAAAASSSSRLEETTQLQSQLQPQPQLPGSFPILYPTYFSPYYPFPFPIWPAGYVPEPPKKEETHEILRPTAVHSKAPINVDELLGMSKLSLAESNKHGESDQSLSLKLGGGSSSRQSAFHPNPSSDSSDIKSVIHAL.

Residues 1 to 21 (MTRRCSHCNHNGHNSRTCPNR) are disordered. A CCHC-type zinc finger spans residues 3–20 (RRCSHCNHNGHNSRTCPN). A compositionally biased stretch (polar residues) spans 8 to 18 (CNHNGHNSRTC). The R/KLFGV (transcriptional repression) signature appears at 24–28 (KLFGV). Positions 41-99 (MGNLSHYTGSGSGGHGTGSNTPGSPGDVPDHVAGDGYASEDFVAGSSSSRERKKGTPWT) are disordered. The HTH myb-type domain occupies 90–146 (RERKKGTPWTEEEHRMFLLGLQKLGKGDWRGISRNYVTTRTPTQVASHAQKYFIRQS). Positions 118–142 (WRGISRNYVTTRTPTQVASHAQKYF) form a DNA-binding region, H-T-H motif. 2 disordered regions span residues 214-254 (SMDS…QPQL) and 321-365 (ESNK…IHAL). The segment covering 220-254 (STTGEPTATAAAASSSSRLEETTQLQSQLQPQPQL) has biased composition (low complexity). Over residues 343-355 (RQSAFHPNPSSDS) the composition is skewed to polar residues.

As to expression, expressed ubiquitously, except in hypocotyls, root tips and lateral root primordia.

The protein localises to the nucleus. Functionally, transcriptional repressor. Direct regulator of the transcription of peroxidase (Prxs) and reactive oxygen species (ROS)-related genes via the recognition of 5'-ATCACA-3' motif. Binds to 5'-TATCCA-3' motif (TA box) and represses the activity of corresponding promoters (e.g. sugar response genes). Regulates hypocotyl elongation in response to darkness by enhancing auxin accumulation in a phytochrome-interacting factor (PIF) proteins-dependent manner. Promotes lateral roots formation. Promotes cell expansion during leaves development via the modulation of cell wall-located Prxs. Plays a critical role in developmentally regulated and dark-induced onset of leaf senescence by repressing the transcription of several genes involved in chloroplast function and responses to light and auxin. Promotes responses to auxin, abscisic acid (ABA), and ethylene. The sequence is that of Transcription factor KUA1 from Arabidopsis thaliana (Mouse-ear cress).